The sequence spans 498 residues: U4/U6 small nuclear ribonucleoprotein Prp31 (498 aa).

The tract at residues 1 to 24 is disordered; sequence MSLADELLADLEEAAEEEEENLID. Acidic residues predominate over residues 7-24; the sequence is LLADLEEAAEEEEENLID. Coiled coils occupy residues 84-119 and 180-214; these read EAAPEYKVIVDANNLTVEIENELNIIHKFIRDKYSK and DEELERIEEACDMALELNQSKHRIYEYVESRMSFI. The 119-residue stretch at 214-332 folds into the Nop domain; that stretch reads IAPNLSIIVG…IERKFDKWQE (119 aa). The tract at residues 333 to 356 is disordered; that stretch reads PPPVKQVKPLPAPLDGQRKKRGGR. Residues 350 to 363 carry the Nuclear localization signal (NLS) motif; sequence RKKRGGRRYRKMKE.

Belongs to the PRP31 family. In terms of assembly, identified in the spliceosome B complex. Component of the U4/U6-U5 tri-snRNP complex. Component of some MLL1/MLL complex.

Its subcellular location is the nucleus. It is found in the nucleus speckle. The protein localises to the cajal body. Functionally, involved in pre-mRNA splicing as component of the spliceosome. Required for the assembly of the U4/U5/U6 tri-snRNP complex, one of the building blocks of the spliceosome. This Xenopus laevis (African clawed frog) protein is U4/U6 small nuclear ribonucleoprotein Prp31 (prpf31).